A 549-amino-acid polypeptide reads, in one-letter code: Glucose-6-phosphate isomerase (549 aa).

Glu-355 (proton donor) is an active-site residue. Active-site residues include His-386 and Lys-514.

This sequence belongs to the GPI family.

It is found in the cytoplasm. It carries out the reaction alpha-D-glucose 6-phosphate = beta-D-fructose 6-phosphate. It participates in carbohydrate biosynthesis; gluconeogenesis. It functions in the pathway carbohydrate degradation; glycolysis; D-glyceraldehyde 3-phosphate and glycerone phosphate from D-glucose: step 2/4. Catalyzes the reversible isomerization of glucose-6-phosphate to fructose-6-phosphate. The polypeptide is Glucose-6-phosphate isomerase (Salmonella agona (strain SL483)).